Reading from the N-terminus, the 119-residue chain is Large ribosomal subunit protein bL19 (119 aa).

It belongs to the bacterial ribosomal protein bL19 family.

Functionally, this protein is located at the 30S-50S ribosomal subunit interface and may play a role in the structure and function of the aminoacyl-tRNA binding site. The chain is Large ribosomal subunit protein bL19 from Pseudoalteromonas atlantica (strain T6c / ATCC BAA-1087).